We begin with the raw amino-acid sequence, 93 residues long: Pyrimidine/purine nucleoside phosphorylase (93 aa).

This sequence belongs to the nucleoside phosphorylase PpnP family.

The enzyme catalyses a purine D-ribonucleoside + phosphate = a purine nucleobase + alpha-D-ribose 1-phosphate. It catalyses the reaction adenosine + phosphate = alpha-D-ribose 1-phosphate + adenine. The catalysed reaction is cytidine + phosphate = cytosine + alpha-D-ribose 1-phosphate. It carries out the reaction guanosine + phosphate = alpha-D-ribose 1-phosphate + guanine. The enzyme catalyses inosine + phosphate = alpha-D-ribose 1-phosphate + hypoxanthine. It catalyses the reaction thymidine + phosphate = 2-deoxy-alpha-D-ribose 1-phosphate + thymine. The catalysed reaction is uridine + phosphate = alpha-D-ribose 1-phosphate + uracil. It carries out the reaction xanthosine + phosphate = alpha-D-ribose 1-phosphate + xanthine. In terms of biological role, catalyzes the phosphorolysis of diverse nucleosides, yielding D-ribose 1-phosphate and the respective free bases. Can use uridine, adenosine, guanosine, cytidine, thymidine, inosine and xanthosine as substrates. Also catalyzes the reverse reactions. The chain is Pyrimidine/purine nucleoside phosphorylase from Pseudomonas aeruginosa (strain LESB58).